A 344-amino-acid chain; its full sequence is Heat-inducible transcription repressor HrcA (344 aa).

This sequence belongs to the HrcA family.

Its function is as follows. Negative regulator of class I heat shock genes (grpE-dnaK-dnaJ and groELS operons). Prevents heat-shock induction of these operons. This chain is Heat-inducible transcription repressor HrcA, found in Streptococcus agalactiae serotype III (strain NEM316).